Here is a 356-residue protein sequence, read N- to C-terminus: Syntaxin-7A (356 aa).

Topologically, residues 1-333 are cytoplasmic; that stretch reads MYNNNNNFGG…NQKSSRNKMC (333 aa). Low complexity-rich tracts occupy residues 32–74 and 207–224; these read NNNN…FDNN and NNNS…NNQQ. 2 disordered regions span residues 32–88 and 187–247; these read NNNN…NSDY and EKTT…RRQQ. Residues 233–244 are compositionally biased toward basic and acidic residues; it reads EDEHQSLMESSR. In terms of domain architecture, t-SNARE coiled-coil homology spans 259–321; it reads NSIIQERDEG…KEGVNHLREA (63 aa). The helical; Anchor for type IV membrane protein transmembrane segment at 334 to 354 threads the bilayer; the sequence is WIVLILLIVCAVLGVILFFTL. The Vesicular portion of the chain corresponds to 355-356; the sequence is RK.

This sequence belongs to the syntaxin family. In terms of assembly, component of the SNARE complex composed of syn7A, syn8A, vamp7A and vti1A. Interacts with nsfA, snpA and snpC.

Its subcellular location is the endosome membrane. Its function is as follows. Involved in the targeting and/or fusion of transport vesicles to their target membrane during transport of proteins from the early endosome to the lysosome. Required for fusion of late endosomes with lysosomes and homotypic lysosomal fusion. May be involved in protein trafficking from the plasma membrane to the early endosome (EE) as well as in homotypic fusion of endocytic organelles. The polypeptide is Syntaxin-7A (Dictyostelium discoideum (Social amoeba)).